A 373-amino-acid chain; its full sequence is Putative F-box/kelch-repeat protein At3g19410 (373 aa).

Positions 1–46 constitute an F-box domain; that stretch reads MTIPELPKDLIEEILCYVPATYLKRLRSTCKGWNRLFKDDRRFAKK. 3 Kelch repeats span residues 101–148, 149–200, and 329–373; these read RIFH…FVLG, YYQE…QCVS, and KLYI…EEKS.

The protein is Putative F-box/kelch-repeat protein At3g19410 of Arabidopsis thaliana (Mouse-ear cress).